A 254-amino-acid polypeptide reads, in one-letter code: Transmembrane protein 70, mitochondrial (254 aa).

Residues 1-78 constitute a mitochondrion transit peptide; sequence MLFLALGGPW…PVCWERGVRC (78 aa). Over 79–112 the chain is Mitochondrial matrix; that stretch reads SHTQLDKSEDGRLIYTGNLARTVFGVKCFSYSTS. A helical membrane pass occupies residues 113-133; that stretch reads LISLAFLPYIFAQNNVIFGSL. The Mitochondrial intermembrane segment spans residues 134–136; sequence PLQ. A helical membrane pass occupies residues 137 to 157; it reads ILFYGTIGSFTVITPALLHFL. Topologically, residues 158–254 are mitochondrial matrix; the sequence is TKGYVIRLYH…SEKKQLKEEK (97 aa).

It belongs to the TMEM70 family. Homooligomer. Interacts (homooligomer form) with ATP5MC1; this interaction facilitates the oligomer formation of subunit c/ATP5MC1 (c-ring) and the c-ring membrane insertion and also protects ATP5MC1 against intramitochondrial proteolysis. Interacts with the core subunits TMEM126B, NDUFAF1, ECSIT and ACAD9 of the MCIA complex. Interacts with ATP5MC3, TMEM242 and TIMMDC1.

The protein resides in the mitochondrion inner membrane. Scaffold protein that participates in the c-ring assembly of mitochondrial ATP synthase (F(1)F(0) ATP synthase or complex V) by facilitating the membrane insertion and oligomer formation of the subunit c/ATP5MC1 through its interaction. Therefore, participates in the early stage of mitochondrial ATP synthase biogenesis and also protects subunit c/ATP5MC1 against intramitochondrial proteolysis. In addition, binds the mitochondrial proton-transporting ATP synthase complexes I and may play a role in the stability of its membrane-bound subassemblies. In Bos taurus (Bovine), this protein is Transmembrane protein 70, mitochondrial.